The primary structure comprises 914 residues: Penicillin-binding protein 1A/1B (914 aa).

A disordered region spans residues 1 to 29 (MSDQFNSREARRKANSKSSPSPKKGKKRK). At 1-37 (MSDQFNSREARRKANSKSSPSPKKGKKRKKGGLFKKT) the chain is on the cytoplasmic side. Residues 38 to 58 (LFTLLILFVLGVVGGAVTFAV) form a helical; Signal-anchor for type II membrane protein membrane-spanning segment. Residues 59–914 (MVSDAPSLDE…TNSSSIEKTN (856 aa)) lie on the Extracellular side of the membrane. A transglycosylase region spans residues 77–246 (STIYDKNGKE…TAYNPVKNPD (170 aa)). Glu-115 (proton donor; for transglycosylase activity) is an active-site residue. The tract at residues 329–662 (TKAQDKLDEL…PDSVVEATVE (334 aa)) is transpeptidase. Ser-390 acts as the Acyl-ester intermediate; for transpeptidase activity in catalysis. In terms of domain architecture, Fibronectin type-III spans 708-795 (KLSGLNVKYD…SYEVPKAEDD (88 aa)). The interval 773–914 (TAVSDDGKST…TNSSSIEKTN (142 aa)) is disordered. The span at 798–828 (KKDQQQTDDEKQDDEKTQDDTQTDDSQKDDG) shows a compositional bias: basic and acidic residues. Residues 829–840 (QTDQDQTDDSTN) are compositionally biased toward acidic residues. 2 stretches are compositionally biased toward low complexity: residues 848-892 (NTNT…GSDT) and 900-914 (SNKT…EKTN).

In the N-terminal section; belongs to the glycosyltransferase 51 family. The protein in the C-terminal section; belongs to the transpeptidase family. The product expressed from the translation of the ponA gene appears as two bands on a gel (1A and 1B), but the specific amino acid sequence of each protein is unknown. Post-translationally, the N-terminus is blocked.

The protein localises to the cell membrane. The protein resides in the forespore inner membrane. The enzyme catalyses [GlcNAc-(1-&gt;4)-Mur2Ac(oyl-L-Ala-gamma-D-Glu-L-Lys-D-Ala-D-Ala)](n)-di-trans,octa-cis-undecaprenyl diphosphate + beta-D-GlcNAc-(1-&gt;4)-Mur2Ac(oyl-L-Ala-gamma-D-Glu-L-Lys-D-Ala-D-Ala)-di-trans,octa-cis-undecaprenyl diphosphate = [GlcNAc-(1-&gt;4)-Mur2Ac(oyl-L-Ala-gamma-D-Glu-L-Lys-D-Ala-D-Ala)](n+1)-di-trans,octa-cis-undecaprenyl diphosphate + di-trans,octa-cis-undecaprenyl diphosphate + H(+). It carries out the reaction Preferential cleavage: (Ac)2-L-Lys-D-Ala-|-D-Ala. Also transpeptidation of peptidyl-alanyl moieties that are N-acyl substituents of D-alanine.. Its pathway is cell wall biogenesis; peptidoglycan biosynthesis. In terms of biological role, cell wall formation. Synthesis of cross-linked peptidoglycan from the lipid intermediates. The enzyme has a penicillin-insensitive transglycosylase N-terminal domain (formation of linear glycan strands) and a penicillin-sensitive transpeptidase C-terminal domain (cross-linking of the peptide subunits). Required for vegetative growth. Has a partially redundant function with PBP-2A (pbpA) during spore outgrowth. This is Penicillin-binding protein 1A/1B (ponA) from Bacillus subtilis (strain 168).